A 523-amino-acid chain; its full sequence is Aldehyde oxidase GLOX (523 aa).

The signal sequence occupies residues 1–19 (MILDAAIVALADLPGTWEL).

It localises to the secreted. It is found in the cell wall. It catalyses the reaction an aldehyde + O2 + H2O = a carboxylate + H2O2 + H(+). Its function is as follows. Catalyzes the oxidation of aldehydes to the corresponding carboxylate by coupling the reaction to the reduction of dioxygen to hydrogen peroxide. Substrates include glyoxal and other aldehydes. Involved in disease resistance against the grapevine powdery mildew E.necator. Is sufficient to confer disease resistance to E.necator. Can produce hydrogen peroxide in response to E.necator infection, and this may directly play a role in the defense mechanism during plant-pathogen interactions. This Vitis pseudoreticulata (Chinese wild grapevine) protein is Aldehyde oxidase GLOX.